The following is a 599-amino-acid chain: Phosphomethylpyrimidine synthase (599 aa).

Residues 1 to 16 are compositionally biased toward polar residues; that stretch reads MSAASANSVTNPSAWE. Disordered stretches follow at residues 1–53 and 82–108; these read MSAA…PNDP and EDTE…GAAS. A compositionally biased stretch (basic and acidic residues) spans 87–100; the sequence is YAGRERNLADDGRS. Substrate-binding positions include N192, M221, Y250, H286, 306 to 308, 347 to 350, and E386; these read SRG and DGLR. Residue H390 coordinates Zn(2+). Residue Y413 participates in substrate binding. H454 contributes to the Zn(2+) binding site. Residues C534, C537, and C542 each contribute to the [4Fe-4S] cluster site.

This sequence belongs to the ThiC family. [4Fe-4S] cluster is required as a cofactor.

It catalyses the reaction 5-amino-1-(5-phospho-beta-D-ribosyl)imidazole + S-adenosyl-L-methionine = 4-amino-2-methyl-5-(phosphooxymethyl)pyrimidine + CO + 5'-deoxyadenosine + formate + L-methionine + 3 H(+). It participates in cofactor biosynthesis; thiamine diphosphate biosynthesis. Its function is as follows. Catalyzes the synthesis of the hydroxymethylpyrimidine phosphate (HMP-P) moiety of thiamine from aminoimidazole ribotide (AIR) in a radical S-adenosyl-L-methionine (SAM)-dependent reaction. The polypeptide is Phosphomethylpyrimidine synthase (Corynebacterium diphtheriae (strain ATCC 700971 / NCTC 13129 / Biotype gravis)).